Consider the following 66-residue polypeptide: uncharacterized protein (66 aa).

This is an uncharacterized protein from Bacillus subtilis (strain 168).